The chain runs to 59 residues: Conotoxin reg3.15 (59 aa).

Residues 1–15 form the signal peptide; that stretch reads RVLLTICLLLFPLTA. Positions 16–44 are excised as a propeptide; that stretch reads IPLGGDQPAERMRNVRSAVQDPRFDSVGW. Cystine bridges form between C45-C59, C46-C55, and C51-C58.

The protein belongs to the conotoxin M superfamily. Expressed by the venom duct.

It is found in the secreted. This Conus regius (Crown cone) protein is Conotoxin reg3.15.